We begin with the raw amino-acid sequence, 181 residues long: MDELTSQALTAFTTRYCDAWHEKHNSWPLSEELYGVPSPCIISSTSDAVYWQPQPFEGEANVNAVESAFDIVIQSAVHAFYTTQFAGDMYAQFADEKLTLLQTWSADDFRRVQENLIGHLVTQKRLKLPPTLFIATLENELEVISVCNLSGEVCKETLGTRNRTVLAASLAEFLTQLKPLL.

It belongs to the Syd family.

The protein resides in the cell inner membrane. In terms of biological role, interacts with the SecY protein in vivo. May bind preferentially to an uncomplexed state of SecY, thus functioning either as a chelating agent for excess SecY in the cell or as a regulatory factor that negatively controls the translocase function. This chain is Protein Syd, found in Citrobacter koseri (strain ATCC BAA-895 / CDC 4225-83 / SGSC4696).